A 200-amino-acid polypeptide reads, in one-letter code: MRTSGLLEQLMESLRCLPGVGPKSAQRMAFHLLQRNRQGGMQLADALSRAMSEIGHCSECRTFTEEDTCAICLNPKRQMNGELCIVESPADIVAVEATGQFSGRYFVLMGHLSPLDGIGPSDIGLDLLDHRLGRGDIKEVILATNPTVEGEATAHYIAEICQEHHVSASRIAHGVPMGGELELVDGTTLSHSILGRQKLY.

The C4-type zinc-finger motif lies at 57–72; the sequence is CSECRTFTEEDTCAIC. One can recognise a Toprim domain in the interval 81-176; the sequence is GELCIVESPA…SASRIAHGVP (96 aa).

The protein belongs to the RecR family.

In terms of biological role, may play a role in DNA repair. It seems to be involved in an RecBC-independent recombinational process of DNA repair. It may act with RecF and RecO. This Aliivibrio salmonicida (strain LFI1238) (Vibrio salmonicida (strain LFI1238)) protein is Recombination protein RecR.